The sequence spans 223 residues: Neurotrophic factor BDNF precursor form (223 aa).

The first 5 residues, Ser1–Ala5, serve as a signal peptide directing secretion. A propeptide spanning residues Ala6–Arg114 is cleaved from the precursor. The N-linked (GlcNAc...) asparagine glycan is linked to Asn107. Cystine bridges form between Cys127–Cys194 and Cys172–Cys223.

Belongs to the NGF-beta family.

It localises to the secreted. Functionally, promotes the survival of neuronal populations that are all located either in the central nervous system or directly connected to it. The chain is Neurotrophic factor BDNF precursor form (BDNF) from Tropidophis haetianus (Haitian dwarf boa).